The chain runs to 347 residues: Protein phosphatase 2C homolog 1 (347 aa).

Residues 1–41 (MKGSHPNAGSLLEPLHKLNPFSENSTSGHRKNASDHSADGE) form a disordered region. Residues 32 to 41 (NASDHSADGE) show a composition bias toward basic and acidic residues. The 253-residue stretch at 71-323 (LAGLMEDKNQ…DNITCIVVNL (253 aa)) folds into the PPM-type phosphatase domain. Mn(2+)-binding residues include D109, G110, D275, and D314.

This sequence belongs to the PP2C family. In terms of assembly, monomer. Mg(2+) is required as a cofactor. It depends on Mn(2+) as a cofactor.

The catalysed reaction is O-phospho-L-seryl-[protein] + H2O = L-seryl-[protein] + phosphate. It catalyses the reaction O-phospho-L-threonyl-[protein] + H2O = L-threonyl-[protein] + phosphate. Its function is as follows. Serine and threonine phosphatase. Has a specialized role in the heat shock response. May be responsible for the dephosphorylation of hsp90. This is Protein phosphatase 2C homolog 1 (ptc1) from Schizosaccharomyces pombe (strain 972 / ATCC 24843) (Fission yeast).